Reading from the N-terminus, the 600-residue chain is Repressor of filamentous growth 1 (600 aa).

Positions Met1–His14 are enriched in polar residues. Disordered stretches follow at residues Met1–Asn59, Asn112–Ser160, Gly180–Asn200, Ala266–Asn337, Ser427–Asn549, and Gln564–Gln600. Low complexity-rich tracts occupy residues Thr20–Asn39 and Ile47–Asn59. The segment covering Phe131 to Ser160 has biased composition (polar residues). A compositionally biased stretch (low complexity) spans Asn188–Asn200. Residues Ile212 to Arg281 constitute a DNA-binding region (HMG box). The segment covering Asn272–Arg289 has biased composition (basic residues). The segment covering Lys297–Met312 has biased composition (low complexity). A compositionally biased stretch (gly residues) spans Ser313–Ile322. A compositionally biased stretch (low complexity) spans Ser427–Gln470. Residues Pro481–Ala496 show a composition bias toward polar residues. Residues Gln497 to Gln506 are compositionally biased toward low complexity. The span at Phe507 to Tyr547 shows a compositional bias: polar residues. Low complexity-rich tracts occupy residues Gln564–Gln574 and His581–Gln600.

It localises to the nucleus. Its function is as follows. Transcription regulator that functions in both the positive and negative regulation of filamentous growth, depending upon the environmental conditions. Recruits the TUP1/SSN6 general repression complex to achieve repression. Regulates genes encoding cell wall components that are specifically expressed in the filamentous forms such as HWP1, RBT1, HYR1, ECE1, ALS1, RBT4 and RBT5. In Candida albicans (strain SC5314 / ATCC MYA-2876) (Yeast), this protein is Repressor of filamentous growth 1 (RFG1).